We begin with the raw amino-acid sequence, 812 residues long: Chromosome alignment-maintaining phosphoprotein 1 (812 aa).

M1 is subject to N-acetylmethionine. A compositionally biased stretch (basic and acidic residues) spans 86-105; it reads ASPDKWNDKPKNQLNKETDP. 2 disordered regions span residues 86–124 and 136–546; these read ASPDKWNDKPKNQLNKETDPVKSPPLPEHQKIPCNSAEP and KLGS…PEAR. Phosphoserine occurs at positions 87, 108, 173, 184, 204, 214, and 217. The segment covering 202-213 has biased composition (pro residues); sequence VPSPEPQKPAPV. Over residues 220–233 the composition is skewed to polar residues; the sequence is ATLSNPKPQKQSHF. 15 positions are modified to phosphoserine: S244, S247, S253, S264, S275, S282, S286, S297, S308, S319, S344, S355, S376, S382, and S386. The interval 271 to 490 is mediates interaction with MAD2L2; sequence ARTTSPEPRK…KSSFFIEPQK (220 aa). Residues 284 to 297 are compositionally biased toward pro residues; sequence SESPEPWKPFPAVS. The span at 336-361 shows a compositional bias: pro residues; the sequence is PAKPAPSVSPGPWKPIPSVSPGPWKP. A compositionally biased stretch (low complexity) spans 363-392; it reads PSVSSASWKSSSVSPSSWKSPPASPESWKS. The residue at position 403 (T403) is a Phosphothreonine. A phosphoserine mark is found at S405, S416, S427, S432, S436, S443, S445, and S452. The mediates localization to the spindle and the kinetochore and is required for the attachment of spindle microtubules to the kinetochore stretch occupies residues 451–590; that stretch reads LSPDQRKTSP…ELQIDAIDDQ (140 aa). Phosphothreonine is present on T458. S459, S462, S472, and S476 each carry phosphoserine. Position 490 is an N6-acetyllysine; alternate (K490). Residue K490 forms a Glycyl lysine isopeptide (Lys-Gly) (interchain with G-Cter in SUMO2); alternate linkage. Residues 499 to 512 show a composition bias toward low complexity; sequence PGPSGPSESPKAAS. Residues S507, S512, and S542 each carry the phosphoserine modification. Residue K565 forms a Glycyl lysine isopeptide (Lys-Gly) (interchain with G-Cter in SUMO2) linkage. Phosphoserine occurs at positions 572 and 603. The mediates localization to the chromosome and the spindle and negatively regulates chromosome alignment stretch occupies residues 591 to 812; sequence KCDILVQEEL…LEPPLEEQQI (222 aa). A Glycyl lysine isopeptide (Lys-Gly) (interchain with G-Cter in SUMO2) cross-link involves residue K606. Residues S615, S626, S627, and S632 each carry the phosphoserine modification. A Glycyl lysine isopeptide (Lys-Gly) (interchain with G-Cter in SUMO2) cross-link involves residue K638. Phosphoserine occurs at positions 651, 652, and 653. K670 participates in a covalent cross-link: Glycyl lysine isopeptide (Lys-Gly) (interchain with G-Cter in SUMO2). Phosphoserine is present on S675. Residue K689 forms a Glycyl lysine isopeptide (Lys-Gly) (interchain with G-Cter in SUMO2) linkage. Phosphoserine is present on S736. The segment at 738 to 760 adopts a C2H2-type zinc-finger fold; sequence YKCTICGKAFLLESLLKNHVAAH.

In terms of assembly, interacts with MAD2L2. Interacts with POGZ, CBX1, CBX3 and CBX5. Phosphorylated by CDK1. Mitotic phosphorylation is required for the attachment of spindle microtubules to the kinetochore.

The protein localises to the nucleus. It localises to the chromosome. The protein resides in the centromere. Its subcellular location is the kinetochore. It is found in the cytoplasm. The protein localises to the cytoskeleton. It localises to the spindle. Functionally, required for proper alignment of chromosomes at metaphase and their accurate segregation during mitosis. Involved in the maintenance of spindle microtubules attachment to the kinetochore during sister chromatid biorientation. May recruit CENPE and CENPF to the kinetochore. The chain is Chromosome alignment-maintaining phosphoprotein 1 (CHAMP1) from Homo sapiens (Human).